The primary structure comprises 362 residues: 3-dehydroquinate synthase (362 aa).

NAD(+) is bound by residues 71 to 76 (DGEQYK), 105 to 109 (GVIGD), 129 to 130 (TT), K142, and K151. Zn(2+)-binding residues include E184, H247, and H264.

It belongs to the sugar phosphate cyclases superfamily. Dehydroquinate synthase family. It depends on NAD(+) as a cofactor. Co(2+) serves as cofactor. Zn(2+) is required as a cofactor.

It localises to the cytoplasm. The enzyme catalyses 7-phospho-2-dehydro-3-deoxy-D-arabino-heptonate = 3-dehydroquinate + phosphate. The protein operates within metabolic intermediate biosynthesis; chorismate biosynthesis; chorismate from D-erythrose 4-phosphate and phosphoenolpyruvate: step 2/7. In terms of biological role, catalyzes the conversion of 3-deoxy-D-arabino-heptulosonate 7-phosphate (DAHP) to dehydroquinate (DHQ). This is 3-dehydroquinate synthase from Haemophilus ducreyi (strain 35000HP / ATCC 700724).